The chain runs to 337 residues: Holliday junction branch migration complex subunit RuvB (337 aa).

The large ATPase domain (RuvB-L) stretch occupies residues 1–180 (MTRLISADKS…FGVISRLEFY (180 aa)). ATP is bound by residues L19, R20, G61, K64, T65, T66, 127–129 (EDF), R170, Y180, and R217. Residue T65 participates in Mg(2+) binding. The tract at residues 181–251 (THDELAFIIT…VADQALALLE (71 aa)) is small ATPAse domain (RuvB-S). Residues 254-337 (EMGFDMMDRA…APEPPQGKLF (84 aa)) form a head domain (RuvB-H) region. DNA contacts are provided by R309 and R314.

The protein belongs to the RuvB family. As to quaternary structure, homohexamer. Forms an RuvA(8)-RuvB(12)-Holliday junction (HJ) complex. HJ DNA is sandwiched between 2 RuvA tetramers; dsDNA enters through RuvA and exits via RuvB. An RuvB hexamer assembles on each DNA strand where it exits the tetramer. Each RuvB hexamer is contacted by two RuvA subunits (via domain III) on 2 adjacent RuvB subunits; this complex drives branch migration. In the full resolvosome a probable DNA-RuvA(4)-RuvB(12)-RuvC(2) complex forms which resolves the HJ.

It is found in the cytoplasm. The enzyme catalyses ATP + H2O = ADP + phosphate + H(+). In terms of biological role, the RuvA-RuvB-RuvC complex processes Holliday junction (HJ) DNA during genetic recombination and DNA repair, while the RuvA-RuvB complex plays an important role in the rescue of blocked DNA replication forks via replication fork reversal (RFR). RuvA specifically binds to HJ cruciform DNA, conferring on it an open structure. The RuvB hexamer acts as an ATP-dependent pump, pulling dsDNA into and through the RuvAB complex. RuvB forms 2 homohexamers on either side of HJ DNA bound by 1 or 2 RuvA tetramers; 4 subunits per hexamer contact DNA at a time. Coordinated motions by a converter formed by DNA-disengaged RuvB subunits stimulates ATP hydrolysis and nucleotide exchange. Immobilization of the converter enables RuvB to convert the ATP-contained energy into a lever motion, pulling 2 nucleotides of DNA out of the RuvA tetramer per ATP hydrolyzed, thus driving DNA branch migration. The RuvB motors rotate together with the DNA substrate, which together with the progressing nucleotide cycle form the mechanistic basis for DNA recombination by continuous HJ branch migration. Branch migration allows RuvC to scan DNA until it finds its consensus sequence, where it cleaves and resolves cruciform DNA. In Geobacter sp. (strain M21), this protein is Holliday junction branch migration complex subunit RuvB.